A 287-amino-acid chain; its full sequence is MSLKERFISYGYLIRLDKPIGTLLLLWPTLWALWLASSGVLDLSILLIFVAGTFLMRSAGCAINDYADRDFDRHVKRTQGRPVTSGKISAKEAVAVASFLALCAFLLIQPLNAFTKQLSVLALLVAFIYPFTKRFFAMPQTVLGIAFGFGIPMAYAAILDFIPLEAWFLFTGNIFWAIAYDTAYAMVDRDDDLRLGLRTSAITFGQYDVVVIAISYGMLFLSHLWVAQLANLSNYFLVGWFAALACAIYHLKLVSTRNRENCFKAFRHNNWLGGFLFLGIVLGLGVH.

9 helical membrane passes run 7–27, 30–50, 94–114, 118–138, 142–162, 167–187, 209–229, 235–255, and 266–286; these read FISY…LLLW, LWAL…LIFV, VAVA…LNAF, LSVL…FFAM, VLGI…LDFI, WFLF…YAMV, VVVI…VAQL, YFLV…KLVS, and FRHN…GLGV.

This sequence belongs to the UbiA prenyltransferase family. Mg(2+) is required as a cofactor.

It localises to the cell inner membrane. The enzyme catalyses all-trans-octaprenyl diphosphate + 4-hydroxybenzoate = 4-hydroxy-3-(all-trans-octaprenyl)benzoate + diphosphate. It functions in the pathway cofactor biosynthesis; ubiquinone biosynthesis. Its function is as follows. Catalyzes the prenylation of para-hydroxybenzoate (PHB) with an all-trans polyprenyl group. Mediates the second step in the final reaction sequence of ubiquinone-8 (UQ-8) biosynthesis, which is the condensation of the polyisoprenoid side chain with PHB, generating the first membrane-bound Q intermediate 3-octaprenyl-4-hydroxybenzoate. The chain is 4-hydroxybenzoate octaprenyltransferase from Polynucleobacter necessarius subsp. necessarius (strain STIR1).